We begin with the raw amino-acid sequence, 228 residues long: 2,3-bisphosphoglycerate-dependent phosphoglycerate mutase (228 aa).

Residues 8–15, 21–22, Arg60, 87–90, Lys98, 114–115, and 183–184 each bind substrate; these read RHGQSEWN, TG, ERHY, RR, and GN. The Tele-phosphohistidine intermediate role is filled by His9. Glu87 acts as the Proton donor/acceptor in catalysis.

The protein belongs to the phosphoglycerate mutase family. BPG-dependent PGAM subfamily.

It catalyses the reaction (2R)-2-phosphoglycerate = (2R)-3-phosphoglycerate. It participates in carbohydrate degradation; glycolysis; pyruvate from D-glyceraldehyde 3-phosphate: step 3/5. Functionally, catalyzes the interconversion of 2-phosphoglycerate and 3-phosphoglycerate. The sequence is that of 2,3-bisphosphoglycerate-dependent phosphoglycerate mutase from Staphylococcus aureus (strain Mu3 / ATCC 700698).